A 192-amino-acid chain; its full sequence is uncharacterized protein (192 aa).

Positions 29–160 constitute a Nudix hydrolase domain; sequence HRQAAVLIPI…PLDIYRRGDS (132 aa). The Nudix box motif lies at 67–89; that stretch reads GAVDDTDASAIAAALREAEEEVA. Residues E83 and E87 each contribute to the Mg(2+) site.

This sequence belongs to the Nudix hydrolase family. PCD1 subfamily. Mn(2+) is required as a cofactor. Mg(2+) serves as cofactor.

In terms of biological role, probably mediates the hydrolysis of some nucleoside diphosphate derivatives. This is an uncharacterized protein from Escherichia coli (strain K12).